The following is a 358-amino-acid chain: G-protein coupled receptor 62 (358 aa).

Over Met-1–Gly-17 the chain is Extracellular. Residue Asn-3 is glycosylated (N-linked (GlcNAc...) asparagine). The helical transmembrane segment at Phe-18–Val-38 threads the bilayer. At Val-39–His-53 the chain is on the cytoplasmic side. Residues Leu-54–Pro-74 form a helical membrane-spanning segment. Residues Pro-75–Ala-89 lie on the Extracellular side of the membrane. Residues Ala-90–Leu-110 form a helical membrane-spanning segment. Residues Ala-111 to Pro-128 are Cytoplasmic-facing. Residues Ala-129 to Gly-149 form a helical membrane-spanning segment. The Extracellular portion of the chain corresponds to Pro-150–Ala-176. Residues Met-177–Val-197 traverse the membrane as a helical segment. At Ala-198 to Lys-234 the chain is on the cytoplasmic side. A helical membrane pass occupies residues Ala-235 to Cys-255. Residues Ala-256–Glu-268 lie on the Extracellular side of the membrane. A helical transmembrane segment spans residues Ala-269–Leu-289. The Cytoplasmic portion of the chain corresponds to Gln-290–Thr-358. The disordered stretch occupies residues Val-334 to Thr-358.

Belongs to the G-protein coupled receptor 1 family. In terms of assembly, homodimer. Forms heterodimer with MTNR1B. Interacts with ARRB1 and ARRB2 in a spontaneous and agonist-independent manner; leading to the internalization of GPR62 in the endosomal compartment. In terms of tissue distribution, expressed in the brain and testes. Expressed widely, in the brain, including the cerebral cortex, cerebellum, hippocampus,thalamus and pituitary gland. In the testes, expressed specifically in the germ cells.

Its subcellular location is the cell membrane. The protein localises to the endosome membrane. In terms of biological role, orphan G-protein coupled receptor. Constitutively activates the G(q/11)/inositol phosphate and the G(s)-alpha/cAMP signaling pathways. Has spontaneous activity for beta-arrestin recruitment. Shows a reciprocal regulatory interaction with the melatonin receptor MTNR1B most likely through receptor heteromerization. The polypeptide is G-protein coupled receptor 62 (Gpr62) (Mus musculus (Mouse)).